The sequence spans 202 residues: LexA repressor (202 aa).

The H-T-H motif DNA-binding region spans 28–48 (RAEIAQRLGFRSPNAAEEHLK). Catalysis depends on for autocatalytic cleavage activity residues serine 119 and lysine 156.

The protein belongs to the peptidase S24 family. As to quaternary structure, homodimer.

It catalyses the reaction Hydrolysis of Ala-|-Gly bond in repressor LexA.. In terms of biological role, represses a number of genes involved in the response to DNA damage (SOS response), including recA and lexA. Binds to the 16 bp palindromic sequence 5'-CTGTATATATATACAG-3'. In the presence of single-stranded DNA, RecA interacts with LexA causing an autocatalytic cleavage which disrupts the DNA-binding part of LexA, leading to derepression of the SOS regulon and eventually DNA repair. This chain is LexA repressor, found in Citrobacter koseri (strain ATCC BAA-895 / CDC 4225-83 / SGSC4696).